The chain runs to 69 residues: Neuropeptide-like protein 30 (69 aa).

A signal peptide spans 1–22; the sequence is MISTSSILILVVLLACFMAASA. Tyrosine amide occurs at positions 29, 39, 46, and 53. Tryptophan amide is present on residues Trp58 and Trp67.

It belongs to the YARP (YGGW-amide related peptide) family. Expressed in hypoderm.

The protein resides in the secreted. Its function is as follows. May have antimicrobial activity. May play a role in response to fungal infection. This Caenorhabditis elegans protein is Neuropeptide-like protein 30 (nlp-30).